The primary structure comprises 84 residues: Conophysin-R (84 aa).

7 disulfide bridges follow: Cys-6-Cys-46, Cys-9-Cys-20, Cys-14-Cys-36, Cys-21-Cys-26, Cys-53-Cys-71, Cys-65-Cys-83, and Cys-72-Cys-77.

As to expression, expressed by the venom duct.

It localises to the secreted. Targets vasopressin-oxytocin related receptors. No effect observed when injected into goldfish or into mice. This chain is Conophysin-R, found in Conus radiatus (Rayed cone).